A 29-amino-acid chain; its full sequence is Serum amyloid P-component (29 aa).

One can recognise a Pentraxin (PTX) domain in the interval 6–29 (LGKVFVFSKESNVDDVKLLTPQTE).

Belongs to the pentraxin family. As to quaternary structure, homopentamer. Pentraxin (or pentaxin) have a discoid arrangement of 5 non-covalently bound subunits. Requires Ca(2+) as cofactor.

It localises to the secreted. This is Serum amyloid P-component from Hippoglossus hippoglossus (Atlantic halibut).